We begin with the raw amino-acid sequence, 157 residues long: Phosphopantetheine adenylyltransferase (157 aa).

Thr10 contacts substrate. ATP-binding positions include 10–11 (TF) and His18. Lys42, Leu74, and Arg88 together coordinate substrate. ATP contacts are provided by residues 89–91 (GLR), Glu99, and 124–130 (NAFISSS).

The protein belongs to the bacterial CoaD family. Homohexamer. It depends on Mg(2+) as a cofactor.

The protein localises to the cytoplasm. The enzyme catalyses (R)-4'-phosphopantetheine + ATP + H(+) = 3'-dephospho-CoA + diphosphate. It participates in cofactor biosynthesis; coenzyme A biosynthesis; CoA from (R)-pantothenate: step 4/5. Reversibly transfers an adenylyl group from ATP to 4'-phosphopantetheine, yielding dephospho-CoA (dPCoA) and pyrophosphate. This is Phosphopantetheine adenylyltransferase from Helicobacter pylori (strain Shi470).